The primary structure comprises 579 residues: Arginine--tRNA ligase (579 aa).

Residues 127-137 carry the 'HIGH' region motif; sequence PNLAKEMHVGH.

It belongs to the class-I aminoacyl-tRNA synthetase family. Monomer.

It localises to the cytoplasm. It carries out the reaction tRNA(Arg) + L-arginine + ATP = L-arginyl-tRNA(Arg) + AMP + diphosphate. In Azotobacter vinelandii (strain DJ / ATCC BAA-1303), this protein is Arginine--tRNA ligase.